Here is a 123-residue protein sequence, read N- to C-terminus: NADH-quinone oxidoreductase subunit A (123 aa).

Transmembrane regions (helical) follow at residues 6-26 (LTPY…AMLI), 66-86 (VVAL…PWAV), and 93-113 (WFGY…LIYI).

Belongs to the complex I subunit 3 family. NDH-1 is composed of 14 different subunits. Subunits NuoA, H, J, K, L, M, N constitute the membrane sector of the complex.

The protein resides in the cell inner membrane. The enzyme catalyses a quinone + NADH + 5 H(+)(in) = a quinol + NAD(+) + 4 H(+)(out). Its function is as follows. NDH-1 shuttles electrons from NADH, via FMN and iron-sulfur (Fe-S) centers, to quinones in the respiratory chain. The immediate electron acceptor for the enzyme in this species is believed to be ubiquinone. Couples the redox reaction to proton translocation (for every two electrons transferred, four hydrogen ions are translocated across the cytoplasmic membrane), and thus conserves the redox energy in a proton gradient. This is NADH-quinone oxidoreductase subunit A from Myxococcus xanthus (strain DK1622).